The chain runs to 91 residues: Succinate dehydrogenase assembly factor 1A, mitochondrial (91 aa).

Belongs to the complex I LYR family. SDHAF1 subfamily. In terms of assembly, interacts with the iron-sulfur protein subunit within the SDH catalytic dimer.

It localises to the mitochondrion matrix. Its function is as follows. Plays an essential role in the assembly of succinate dehydrogenase (SDH), an enzyme complex (also referred to as respiratory complex II) that is a component of both the tricarboxylic acid (TCA) cycle and the mitochondrial electron transport chain, and which couples the oxidation of succinate to fumarate with the reduction of ubiquinone (coenzyme Q) to ubiquinol. Promotes maturation of the iron-sulfur protein subunit of the SDH catalytic dimer, protecting it from the deleterious effects of oxidants. May act together with SDHAF3. The chain is Succinate dehydrogenase assembly factor 1A, mitochondrial from Dictyostelium discoideum (Social amoeba).